Here is a 509-residue protein sequence, read N- to C-terminus: Maturase K (509 aa).

Belongs to the intron maturase 2 family. MatK subfamily.

It localises to the plastid. The protein resides in the chloroplast. Functionally, usually encoded in the trnK tRNA gene intron. Probably assists in splicing its own and other chloroplast group II introns. This is Maturase K from Nicotiana clevelandii (Wild tobacco).